The following is a 91-amino-acid chain: Small ribosomal subunit protein uS15 (91 aa).

This sequence belongs to the universal ribosomal protein uS15 family. In terms of assembly, part of the 30S ribosomal subunit. Forms a bridge to the 50S subunit in the 70S ribosome, contacting the 23S rRNA.

In terms of biological role, one of the primary rRNA binding proteins, it binds directly to 16S rRNA where it helps nucleate assembly of the platform of the 30S subunit by binding and bridging several RNA helices of the 16S rRNA. Its function is as follows. Forms an intersubunit bridge (bridge B4) with the 23S rRNA of the 50S subunit in the ribosome. The protein is Small ribosomal subunit protein uS15 of Rickettsia felis (strain ATCC VR-1525 / URRWXCal2) (Rickettsia azadi).